We begin with the raw amino-acid sequence, 293 residues long: Ribosomal protein L11 methyltransferase (293 aa).

S-adenosyl-L-methionine is bound by residues Thr145, Gly166, Asp188, and Asn230.

The protein belongs to the methyltransferase superfamily. PrmA family.

It localises to the cytoplasm. The enzyme catalyses L-lysyl-[protein] + 3 S-adenosyl-L-methionine = N(6),N(6),N(6)-trimethyl-L-lysyl-[protein] + 3 S-adenosyl-L-homocysteine + 3 H(+). Methylates ribosomal protein L11. In Shewanella pealeana (strain ATCC 700345 / ANG-SQ1), this protein is Ribosomal protein L11 methyltransferase.